Reading from the N-terminus, the 862-residue chain is Axin-1 (862 aa).

Positions 1–78 (MNIQEQGFPL…GYEPEGSASP (78 aa)) are disordered. Positions 20–29 (APRPPVPGEE) match the Tankyrase-binding motif motif. Ser-75 and Ser-77 each carry phosphoserine; by CK1. In terms of domain architecture, RGS spans 88 to 211 (SLHSLLDDQD…LKSDIYLEYT (124 aa)). Residues 209–338 (EYTRTGSESP…DADTLSLTDS (130 aa)) are interaction with TP53. Disordered regions lie at residues 215–289 (SESP…YSEG) and 316–344 (TSAN…DGIP). Phosphoserine; by CK1 is present on Ser-217. Residues 242–258 (NEDEEWKCDQDMDEDDG) are compositionally biased toward acidic residues. A compositionally biased stretch (low complexity) spans 325-339 (SLSSDADTLSLTDSS). The segment at 348–433 (IRKQHRREMQ…DGDPSSGPPG (86 aa)) is interaction with GSK3B. The tract at residues 353–411 (RREMQESVQVNGRVPLPHIPRTYRVPKEVRVEPQKFAEELIHRLEAVQRTREAEEKLEE) is interaction with SIAH1 and SIAH2. The disordered stretch occupies residues 413–441 (LKRVRMEEEGEDGDPSSGPPGPCHKLPPA). Positions 429–441 (SGPPGPCHKLPPA) are enriched in pro residues. The interval 434–502 (PCHKLPPAPA…SPDSGHVAKM (69 aa)) is interaction with CTNNB1. At Ser-469 the chain carries Phosphoserine; by CK1. The disordered stretch occupies residues 480-500 (RTPGRQSPGPGHRSPDSGHVA). The residue at position 481 (Thr-481) is a Phosphothreonine; by GSK3-beta. Phosphoserine occurs at positions 486, 493, and 511. An interaction with RNF111 region spans residues 507 to 757 (GGAASGHGKH…PVLHVVPAVS (251 aa)). Positions 531–544 (HHRHVHHHVHHSTA) are enriched in basic residues. Disordered regions lie at residues 531-629 (HHRH…AEKN) and 641-679 (KEIS…GPQL). Residues 545–556 (RPKEQVEAEATR) are compositionally biased toward basic and acidic residues. The tract at residues 575–789 (SRGYSESVGA…CDSIVVAYYF (215 aa)) is interaction with PPP2CA. A Phosphoserine modification is found at Ser-581. The interaction with HIPK2 stretch occupies residues 677–752 (PQLRTSVQPS…RPACAPVLHV (76 aa)). A DIX domain is found at 780–862 (CDSIVVAYYF…KIIGKVEKVD (83 aa)). Residues Lys-857 and Lys-860 each participate in a glycyl lysine isopeptide (Lys-Gly) (interchain with G-Cter in SUMO) cross-link.

Homodimer. Interacts with ZBED3; the interaction is direct, enhanced by protein kinase GSK3B and casein kinase CSNK1E activities and decreases GSK3B-induced beta-catenin serine and threonine phosphorylations. Component of the beta-catenin destruction complex, containing at least, CTNNB1, an axin and GSK3B, that regulates CTNNB1 protein levels through phosphorylation and ubiquitination. Interacts with CTNNB1 (via the armadillo repeats 2-7). Interacts with GSK3B; the interaction hyperphosphorylates CTNNB1 leading to its ubiquitination and destruction. Component of the AXIN1-HIPK2-TP53 complex. Interacts directly in the complex with TP53 and HIPK2. Interacts with DAXX; the interaction stimulates the interaction of DAXX with TP53, stimulates 'Ser-46' phosphorylation of TP53 and induces cell death on UV irradiation. Also binds APC, SMAD6, SMAD7 and RNF111. Interacts with DIXDC1; prevents interaction with MAP3K1. Interacts with MAP3K4. Interacts with ANKRD6 and AIDA. Interacts with MDFI; the interaction decreases AXIN1-mediated JUN N-terminal kinase (JNK) activation. Interacts with MDFIC; the interaction inhibits beta-cateninin-mediated signaling and AXIN1-mediated JUN N-terminal kinase (JNK) activation. Interacts with LRP5 (via its phosphorylated PPPSP motifs); the interaction is stimulated by WNT1 and GSK3B and activates beta-catenin signaling. Interacts (via the C-terminal) with PPP1CA; the interaction dephosphorylates AXIN1 and regulates interaction with GSK3B. Interacts with PPP2CA; the interaction dephosphorylates AXIN1. Interacts with MACF1. Found in a complex composed of MACF1, APC, AXIN1, CTNNB1 and GSK3B. Interacts with TNKS. Interacts with DAB2; the interaction is mutually exclusive with the AXIN1:PPP1CA interaction. Interacts with WDR26. Interacts with GID8. Interacts with SIAH1 and SIAH2; both probably catalyze AXIN1 ubiquitination and subsequent proteasome-mediated ubiquitin-dependent degradation. Interaction with GSK3B and AXIN1 is competitive. Phosphorylation and dephosphorylation of AXIN1 regulates assembly and function of the beta-catenin complex. Phosphorylated by CK1 and GSK3B. Dephosphorylated by PPP1CA and PPP2CA. Phosphorylation by CK1 enhances binding of GSK3B to AXIN1. Post-translationally, ADP-ribosylated by tankyrase TNKS and TNKS2. Poly-ADP-ribosylated protein is recognized by RNF146, followed by ubiquitination at 'Lys-48' and subsequent activation of the Wnt signaling pathway. In terms of processing, ubiquitinated by RNF146 when poly-ADP-ribosylated, leading to its degradation and subsequent activation of the Wnt signaling pathway. Sumoylation at Lys-857 and Lys-860 prevents ubiquitination and degradation. Sumoylation is required for AXIN1-mediated JNK activation. Deubiquitinated by USP34, deubiquitinated downstream of beta-catenin stabilization step: deubiquitination is important for nuclear accumulation during Wnt signaling to positively regulate beta-catenin (CTNBB1)-mediated transcription. Ubiquitination by SIAH1 and SIAH2 induces its proteasomal degradation as part of the activation of the Wnt signaling pathway. Ubiquitously expressed.

The protein resides in the cytoplasm. It is found in the nucleus. The protein localises to the membrane. It localises to the cell membrane. Its function is as follows. Component of the beta-catenin destruction complex required for regulating CTNNB1 levels through phosphorylation and ubiquitination, and modulating Wnt-signaling. Controls dorsoventral patterning via two opposing effects; down-regulates CTNNB1 to inhibit the Wnt signaling pathway and ventralize embryos, but also dorsalizes embryos by activating a Wnt-independent JNK signaling pathway. In Wnt signaling, probably facilitates the phosphorylation of CTNNB1 and APC by GSK3B. Likely to function as a tumor suppressor. Enhances TGF-beta signaling by recruiting the RNF111 E3 ubiquitin ligase and promoting the degradation of inhibitory SMAD7. Also a component of the AXIN1-HIPK2-TP53 complex which controls cell growth, apoptosis and development. Facilitates the phosphorylation of TP53 by HIPK2 upon ultraviolet irradiation. The chain is Axin-1 (AXIN1) from Homo sapiens (Human).